Here is a 943-residue protein sequence, read N- to C-terminus: Serine/threonine-protein kinase ATG1 (943 aa).

Positions 22–327 constitute a Protein kinase domain; that stretch reads FVIDKEIGKG…FEDFFHHPVI (306 aa). Residues 28 to 36 and Lys-51 each bind ATP; that span reads IGKGSFAQV. Asp-165 acts as the Proton acceptor in catalysis. Disordered regions lie at residues 334-468, 503-561, 774-800, 858-888, and 914-943; these read LVED…LTDE, QQGQ…SPGA, LPEE…GGQA, HLPK…SDDK, and AASK…SVPT. Positions 338-352 are enriched in basic and acidic residues; that stretch reads DIPKPEKPVLAETKS. Over residues 517-529 the composition is skewed to polar residues; it reads ATQQGHPTSTTGA. Basic and acidic residues predominate over residues 542–554; sequence RNDHYRKASHDKT. Low complexity predominate over residues 919-928; it reads QQQQQQQQVV.

It belongs to the protein kinase superfamily. Ser/Thr protein kinase family. APG1/unc-51/ULK1 subfamily. Homodimer. Forms a ternary complex with ATG13 and ATG17.

Its subcellular location is the cytoplasm. The protein localises to the preautophagosomal structure membrane. The enzyme catalyses L-seryl-[protein] + ATP = O-phospho-L-seryl-[protein] + ADP + H(+). It catalyses the reaction L-threonyl-[protein] + ATP = O-phospho-L-threonyl-[protein] + ADP + H(+). In terms of biological role, serine/threonine protein kinase involved in the cytoplasm to vacuole transport (Cvt) and found to be essential in autophagy, where it is required for the formation of autophagosomes. Involved in the clearance of protein aggregates which cannot be efficiently cleared by the proteasome. Required for selective autophagic degradation of the nucleus (nucleophagy) as well as for mitophagy which contributes to regulate mitochondrial quantity and quality by eliminating the mitochondria to a basal level to fulfill cellular energy requirements and preventing excess ROS production. Also involved in endoplasmic reticulum-specific autophagic process, in selective removal of ER-associated degradation (ERAD) substrates. Plays a key role in ATG9 and ATG23 cycling through the pre-autophagosomal structure and is necessary to promote ATG18 binding to ATG9 through phosphorylation of ATG9. Catalyzes phosphorylation of ATG4, decreasing the interaction between ATG4 and ATG8 and impairing deconjugation of PE-conjugated forms of ATG8. The chain is Serine/threonine-protein kinase ATG1 from Chaetomium globosum (strain ATCC 6205 / CBS 148.51 / DSM 1962 / NBRC 6347 / NRRL 1970) (Soil fungus).